We begin with the raw amino-acid sequence, 117 residues long: EVKLVESGGDLVKPGGSLRLSCVASGFTFSSNGMSWVRQDPGEGLQWVADISSSGQTYYADAVKGRFSISRDNAKNTLYLQMEDLRVEDTAVYYCATEGDIEIPRYFGQGTIVTVSS.

An Ig-like domain is found at 1-116 (EVKLVESGGD…FGQGTIVTVS (116 aa)).

This Canis lupus familiaris (Dog) protein is Ig heavy chain V region MOO.